The primary structure comprises 214 residues: Glutathione S-transferase 1 (214 aa).

Positions 2-83 (APMKLYGAVM…YAARKNKPEL (82 aa)) constitute a GST N-terminal domain. Glutathione contacts are provided by residues Ser-12, 41-42 (HK), 54-55 (QV), and 67-68 (ES). In terms of domain architecture, GST C-terminal spans 88–214 (NLEEAAMVDV…KVAALMKPSA (127 aa)).

This sequence belongs to the GST superfamily. Phi family. Homodimer or heterodimer of GST-I and GST-IV (=GST-II). Expressed in the stem and leaves, lower levels are seen in the pollen and endosperm.

The enzyme catalyses RX + glutathione = an S-substituted glutathione + a halide anion + H(+). Conjugation of reduced glutathione to a wide number of exogenous and endogenous hydrophobic electrophiles. Involved in the detoxification of certain herbicides. The chain is Glutathione S-transferase 1 (GST1) from Zea mays (Maize).